Reading from the N-terminus, the 140-residue chain is Ribosome maturation factor RimP (140 aa).

It belongs to the RimP family.

It localises to the cytoplasm. In terms of biological role, required for maturation of 30S ribosomal subunits. The polypeptide is Ribosome maturation factor RimP (Campylobacter jejuni subsp. jejuni serotype O:2 (strain ATCC 700819 / NCTC 11168)).